Reading from the N-terminus, the 183-residue chain is Probable adenylyl-sulfate kinase (183 aa).

17–24 lines the ATP pocket; it reads GLPGSGKT. Residue serine 91 is the Phosphoserine intermediate of the active site.

This sequence belongs to the APS kinase family.

It catalyses the reaction adenosine 5'-phosphosulfate + ATP = 3'-phosphoadenylyl sulfate + ADP + H(+). Its pathway is sulfur metabolism; hydrogen sulfide biosynthesis; sulfite from sulfate: step 2/3. Catalyzes the synthesis of activated sulfate. The polypeptide is Probable adenylyl-sulfate kinase (cysC) (Aeropyrum pernix (strain ATCC 700893 / DSM 11879 / JCM 9820 / NBRC 100138 / K1)).